A 338-amino-acid polypeptide reads, in one-letter code: Phenylalanine--tRNA ligase alpha subunit (338 aa).

Residue glutamate 259 coordinates Mg(2+).

Belongs to the class-II aminoacyl-tRNA synthetase family. Phe-tRNA synthetase alpha subunit type 1 subfamily. In terms of assembly, tetramer of two alpha and two beta subunits. It depends on Mg(2+) as a cofactor.

It localises to the cytoplasm. It catalyses the reaction tRNA(Phe) + L-phenylalanine + ATP = L-phenylalanyl-tRNA(Phe) + AMP + diphosphate + H(+). The chain is Phenylalanine--tRNA ligase alpha subunit from Herminiimonas arsenicoxydans.